Reading from the N-terminus, the 193-residue chain is Superoxide dismutase [Fe] (193 aa).

Fe cation contacts are provided by H27, H74, D157, and H161.

The protein belongs to the iron/manganese superoxide dismutase family. Monomer. It depends on Fe cation as a cofactor.

The catalysed reaction is 2 superoxide + 2 H(+) = H2O2 + O2. Functionally, destroys superoxide anion radicals which are normally produced within the cells and which are toxic to biological systems. Involved in the metabolism of 4-aminophenol. May have an indirect role in hydroxyquinol metabolism by scavenging and detoxifying reactive species that promote its auto-oxidation. This is Superoxide dismutase [Fe] from Burkholderia sp.